A 486-amino-acid chain; its full sequence is MKNGVKQISFLSLIGLSLIGLSLTNIAWAKVARPKNDTLTNTIQSAELKTSSFSSMPKKEIPNRHIISLSKSQLAQHPRLVLRGLILALYQNNTQAVQLLLPLYKQFPQHDNFLLTWAKAIDAREQGDLTQSIAYYRELFALDASLLPLRYQLAQALFFNYENESAKIQFEKLRTEVDDEKFLGVIDQYLLTLNQRNQWIWQVGLNFLNDDNLNNAPKSGTKIGSWTAWEKESGKGGRVFFISRKKWPWADHFFSKTMFNGNGKYYWDNKKYNEATLRIGGGLGYQTALVEVSLFPFQEKRWYAGGSSGTNTMKQYADKLGIRLENVDWLSKTWQISTALEYGESRYKIRKHLDGNYYFISSTLFYLPKSTQFWFVGMDFHRENTQALDNAYQQKTLRLGWGQDWSYGISSRLTFSYANRVYREKDLIGIQQKNREYATTITLWHRNIHFMGLTPKLSWDYQKSTSNHAFYRYDKNRIYLEIGKIF.

Positions 1–29 (MKNGVKQISFLSLIGLSLIGLSLTNIAWA) are cleaved as a signal peptide. Residues 30–197 (KVARPKNDTL…QYLLTLNQRN (168 aa)) are N-terminal domain. A C-terminal probable beta barrel region spans residues 198–486 (QWIWQVGLNF…RIYLEIGKIF (289 aa)). The next 14 beta stranded transmembrane spans lie at 199–209 (WIWQVGLNFLN), 237–248 (GRVFFISRKKWP), 253–262 (FFSKTMFNGN), 276–286 (TLRIGGGLGYQ), 290–300 (VEVSLFPFQEK), 320–330 (LGIRLENVDWL), 334–344 (WQISTALEYGE), 358–367 (YFISSTLFYL), 373–382 (FWFVGMDFHR), 395–404 (KTLRLGWGQD), 409–419 (ISSRLTFSYAN), 437–446 (YATTITLWHR), 453–463 (LTPKLSWDYQK), and 476–486 (NRIYLEIGKIF).

It belongs to the Slam family.

The protein localises to the cell outer membrane. In terms of biological role, required for correct export to the cell surface of some cell outer membrane lipoproteins (tested with TpbP) upon heterologous expression in E.coli and probably also in Haemophilus. This chain is Surface lipoprotein assembly modifier, found in Haemophilus influenzae (strain 86-028NP).